Here is a 294-residue protein sequence, read N- to C-terminus: Lipoyl synthase 1 (294 aa).

Positions 38, 43, 49, 64, 68, 71, and 279 each coordinate [4Fe-4S] cluster. The region spanning 50–268 (FAGGTATFLI…EEGQTRFGFL (219 aa)) is the Radical SAM core domain.

Belongs to the radical SAM superfamily. Lipoyl synthase family. [4Fe-4S] cluster is required as a cofactor.

The protein resides in the cytoplasm. The enzyme catalyses [[Fe-S] cluster scaffold protein carrying a second [4Fe-4S](2+) cluster] + N(6)-octanoyl-L-lysyl-[protein] + 2 oxidized [2Fe-2S]-[ferredoxin] + 2 S-adenosyl-L-methionine + 4 H(+) = [[Fe-S] cluster scaffold protein] + N(6)-[(R)-dihydrolipoyl]-L-lysyl-[protein] + 4 Fe(3+) + 2 hydrogen sulfide + 2 5'-deoxyadenosine + 2 L-methionine + 2 reduced [2Fe-2S]-[ferredoxin]. The protein operates within protein modification; protein lipoylation via endogenous pathway; protein N(6)-(lipoyl)lysine from octanoyl-[acyl-carrier-protein]: step 2/2. Catalyzes the radical-mediated insertion of two sulfur atoms into the C-6 and C-8 positions of the octanoyl moiety bound to the lipoyl domains of lipoate-dependent enzymes, thereby converting the octanoylated domains into lipoylated derivatives. The chain is Lipoyl synthase 1 from Prochlorococcus marinus (strain SARG / CCMP1375 / SS120).